A 372-amino-acid chain; its full sequence is Tubby-like F-box protein 9 (372 aa).

Positions 1-51 (MALWRCSSSWLSSVSRSSGGVGGGESKVSPEIAPVSGGEGEGEEEEGEEER) are disordered. Over residues 7 to 18 (SSSWLSSVSRSS) the composition is skewed to low complexity. Over residues 40–49 (GEGEEEEGEE) the composition is skewed to acidic residues. The F-box domain maps to 50 to 105 (ERWSRLLPELLTEIMRRVDAGAERWPPRRDVVACACVCRRWRDAAVSVVRPPLECG).

This sequence belongs to the TUB family. In terms of tissue distribution, ubiquitous.

This is Tubby-like F-box protein 9 (TULP9) from Oryza sativa subsp. japonica (Rice).